The chain runs to 818 residues: Auxin response factor 12 (818 aa).

Positions 1–10 (MSSSSAASIG) are enriched in low complexity. The disordered stretch occupies residues 1 to 24 (MSSSSAASIGPPQPPPPPAPPEEE). The span at 11–20 (PPQPPPPPAP) shows a compositional bias: pro residues. A DNA-binding region (TF-B3) is located at residues 135–237 (FCKTLTASDT…QLLLGIRRAS (103 aa)). 2 disordered regions span residues 526 to 565 (NDQKQKIQPDQSYQVPTSAVLPSPTSLPSHLREKFGFSDP) and 629 to 648 (GSVLHNSPTSKDGSVENKIG). A compositionally biased stretch (polar residues) spans 629–640 (GSVLHNSPTSKD). The PB1 domain occupies 719 to 803 (RTFVKVYKSG…WYIKILSPED (85 aa)).

This sequence belongs to the ARF family. As to quaternary structure, homodimers and heterodimers. Expressed in roots, culms, leaves and young panicles.

Its subcellular location is the nucleus. Its function is as follows. Auxin response factors (ARFs) are transcriptional factors that bind specifically to the DNA sequence 5'-TGTCTC-3' found in the auxin-responsive promoter elements (AuxREs). This is Auxin response factor 12 (ARF12) from Oryza sativa subsp. japonica (Rice).